The chain runs to 240 residues: UDP-2,3-diacylglucosamine hydrolase (240 aa).

Residues Asp-8, His-10, Asp-41, Asn-79, and His-114 each coordinate Mn(2+). Substrate is bound at residue 79-80; that stretch reads NR. Residues Asp-122, Ser-160, Asn-164, Lys-167, and His-195 each coordinate substrate. The Mn(2+) site is built by His-195 and His-197.

Belongs to the LpxH family. The cofactor is Mn(2+).

The protein localises to the cell inner membrane. It carries out the reaction UDP-2-N,3-O-bis[(3R)-3-hydroxytetradecanoyl]-alpha-D-glucosamine + H2O = 2-N,3-O-bis[(3R)-3-hydroxytetradecanoyl]-alpha-D-glucosaminyl 1-phosphate + UMP + 2 H(+). The protein operates within glycolipid biosynthesis; lipid IV(A) biosynthesis; lipid IV(A) from (3R)-3-hydroxytetradecanoyl-[acyl-carrier-protein] and UDP-N-acetyl-alpha-D-glucosamine: step 4/6. Its function is as follows. Hydrolyzes the pyrophosphate bond of UDP-2,3-diacylglucosamine to yield 2,3-diacylglucosamine 1-phosphate (lipid X) and UMP by catalyzing the attack of water at the alpha-P atom. Involved in the biosynthesis of lipid A, a phosphorylated glycolipid that anchors the lipopolysaccharide to the outer membrane of the cell. This is UDP-2,3-diacylglucosamine hydrolase from Salmonella agona (strain SL483).